Consider the following 322-residue polypeptide: MKLRNVSKNNLNKEDTKLSIEQFGGNVEWFNITKTLSESLPYIQQFSGETFIIKYGGAAMTDKKLAESFAHDVVLLKQLGINPIVVHGGGNKINEFLEKINKKSTFINGLRITDAETLEIVEMVLCGLVNKNITQLINNAGGNAIGLCGKDANLIEAKKICYTYKENQSNNVEKILDMGFVGEPHDINTDLLFFMEESDFIPVIAPVCSGENNLTYNVNADLVAGALANAMAAAKLIILTNVSGVTDSNGNLISELSVSHAENLIDNGTAHTGMIPKLQTCVRVVKEGYGSAHIIDGRIPHVLLLELFTIHGTGTMVVNSGV.

Substrate is bound by residues 89–90, arginine 111, and asparagine 217; that span reads GG.

The protein belongs to the acetylglutamate kinase family. ArgB subfamily.

It is found in the cytoplasm. It carries out the reaction N-acetyl-L-glutamate + ATP = N-acetyl-L-glutamyl 5-phosphate + ADP. It participates in amino-acid biosynthesis; L-arginine biosynthesis; N(2)-acetyl-L-ornithine from L-glutamate: step 2/4. Functionally, catalyzes the ATP-dependent phosphorylation of N-acetyl-L-glutamate. The polypeptide is Acetylglutamate kinase (Ehrlichia ruminantium (strain Welgevonden)).